We begin with the raw amino-acid sequence, 389 residues long: Lipid-A-disaccharide synthase (389 aa).

Belongs to the LpxB family.

It carries out the reaction a lipid X + a UDP-2-N,3-O-bis[(3R)-3-hydroxyacyl]-alpha-D-glucosamine = a lipid A disaccharide + UDP + H(+). Its pathway is bacterial outer membrane biogenesis; LPS lipid A biosynthesis. Its function is as follows. Condensation of UDP-2,3-diacylglucosamine and 2,3-diacylglucosamine-1-phosphate to form lipid A disaccharide, a precursor of lipid A, a phosphorylated glycolipid that anchors the lipopolysaccharide to the outer membrane of the cell. The protein is Lipid-A-disaccharide synthase of Burkholderia vietnamiensis (strain G4 / LMG 22486) (Burkholderia cepacia (strain R1808)).